A 412-amino-acid chain; its full sequence is Histidine--tRNA ligase (412 aa).

The protein belongs to the class-II aminoacyl-tRNA synthetase family. As to quaternary structure, homodimer.

The protein resides in the cytoplasm. It catalyses the reaction tRNA(His) + L-histidine + ATP = L-histidyl-tRNA(His) + AMP + diphosphate + H(+). In Maridesulfovibrio salexigens (strain ATCC 14822 / DSM 2638 / NCIMB 8403 / VKM B-1763) (Desulfovibrio salexigens), this protein is Histidine--tRNA ligase.